The chain runs to 174 residues: Non-classical export protein 2 homolog 1 (174 aa).

At 1–7 the chain is on the cytoplasmic side; that stretch reads MLSAADN. A helical transmembrane segment spans residues 8 to 28; that stretch reads LVRIINAVFLIISIGLISGLI. The Extracellular portion of the chain corresponds to 29-41; sequence GTQTKHSSRVNFC. A helical membrane pass occupies residues 42–62; it reads MFAAVYGLVTDSLYGFLANFW. At 63–69 the chain is on the cytoplasmic side; it reads TSLTYPA. A helical membrane pass occupies residues 70–90; it reads ILLVLDFLNFIFTFVAATALA. Residues 91–122 are Extracellular-facing; it reads VGIRCHSCKNKTYLEQNKIIQGSSSRCHQSQA. A helical membrane pass occupies residues 123–143; sequence AVAFFYFSCFLFLIKVTVATM. The Cytoplasmic portion of the chain corresponds to 144 to 174; it reads GMMQNGGFGSNTGFSRRRARRQMGIPTISQV.

This sequence belongs to the NCE102 family.

The protein resides in the cell membrane. Functionally, involved in membrane organization. Required for the formation of membrane compartments of CAN1 (MCCs), localization of CAN1 at the MCCs and subsequent invagination of the plasma membrane at the MCCs sites. Involved in eisosome organization and might act as a sensor of sphingolipids that regulates plasma membrane function. Involved in a novel pathway of export of proteins that lack a cleavable signal sequence. Non-classical export pathway also functions as an alternative clearance/detoxification pathway to eliminate damaged material, when the basic repair pathway is not sufficient. This Saccharomyces cerevisiae (strain ATCC 204508 / S288c) (Baker's yeast) protein is Non-classical export protein 2 homolog 1 (FHN1).